We begin with the raw amino-acid sequence, 215 residues long: Large ribosomal subunit protein uL4 (215 aa).

A disordered region spans residues 46-72; sequence TAKSKNRAEVSGGGRKPWAQKGGGRAR. Positions 56–71 are enriched in gly residues; the sequence is SGGGRKPWAQKGGGRA.

The protein belongs to the universal ribosomal protein uL4 family. In terms of assembly, part of the 50S ribosomal subunit.

In terms of biological role, one of the primary rRNA binding proteins, this protein initially binds near the 5'-end of the 23S rRNA. It is important during the early stages of 50S assembly. It makes multiple contacts with different domains of the 23S rRNA in the assembled 50S subunit and ribosome. Forms part of the polypeptide exit tunnel. This is Large ribosomal subunit protein uL4 from Helicobacter pylori (strain J99 / ATCC 700824) (Campylobacter pylori J99).